We begin with the raw amino-acid sequence, 253 residues long: Triosephosphate isomerase (253 aa).

Position 9–11 (9–11 (NWK)) interacts with substrate. The Electrophile role is filled by His-95. The active-site Proton acceptor is the Glu-167. Substrate-binding positions include Gly-173, Ser-213, and 234 to 235 (GG). The residue at position 213 (Ser-213) is a Phosphoserine.

It belongs to the triosephosphate isomerase family. As to quaternary structure, homodimer.

Its subcellular location is the cytoplasm. The enzyme catalyses D-glyceraldehyde 3-phosphate = dihydroxyacetone phosphate. It participates in carbohydrate biosynthesis; gluconeogenesis. Its pathway is carbohydrate degradation; glycolysis; D-glyceraldehyde 3-phosphate from glycerone phosphate: step 1/1. In terms of biological role, involved in the gluconeogenesis. Catalyzes stereospecifically the conversion of dihydroxyacetone phosphate (DHAP) to D-glyceraldehyde-3-phosphate (G3P). The protein is Triosephosphate isomerase of Bacillus velezensis (strain DSM 23117 / BGSC 10A6 / LMG 26770 / FZB42) (Bacillus amyloliquefaciens subsp. plantarum).